The following is a 511-amino-acid chain: Vesicular acetylcholine transporter (511 aa).

Topologically, residues 1-36 are cytoplasmic; the sequence is MVVGQAKAAMGKISSAIGERSKRISGAMNEPLRKRK. Residues 37 to 57 traverse the membrane as a helical segment; it reads ILLVIVCIAMLLDNMLYMVIV. Residues 58–108 are Lumenal, vesicle-facing; sequence PIVPNYLETIRTYKLVYITIPSNGTNGSLLNSTQRAVLERNPNANEDIQIG. 3 N-linked (GlcNAc...) asparagine glycosylation sites follow: Asn-80, Asn-83, and Asn-88. A helical membrane pass occupies residues 109 to 129; it reads VLFASKAILQLLSNPFTGTFI. Residues 130-135 lie on the Cytoplasmic side of the membrane; sequence DRVGYD. Residues 136–156 traverse the membrane as a helical segment; it reads IPLLIGLTIMFFSTITFAFGE. Residues 157–165 are Lumenal, vesicle-facing; the sequence is SYAILFAAR. The chain crosses the membrane as a helical span at residues 166-186; it reads SLQGLGSAFADTSGIAMIADK. Topologically, residues 187-197 are cytoplasmic; sequence YTEESERTQAL. The helical transmembrane segment at 198–218 threads the bilayer; that stretch reads GIALAFISFGSLVAPPFGGVL. At 219-225 the chain is on the lumenal, vesicle side; it reads YQFAGKW. The chain crosses the membrane as a helical span at residues 226 to 246; that stretch reads VPFLVLSFVCLLDGILLLMVV. Topologically, residues 247-267 are cytoplasmic; the sequence is TPFASRTRGNTLQGTPIHKLM. A helical transmembrane segment spans residues 268-288; that stretch reads IDPYIAVVAGALTTCNIPLAF. Residues 289–306 are Lumenal, vesicle-facing; it reads LEPTISNWMKKTMNASEW. The N-linked (GlcNAc...) asparagine glycan is linked to Asn-302. The helical transmembrane segment at 307 to 327 threads the bilayer; it reads QMGITWLPAFFPHILGVYITV. At 328 to 337 the chain is on the cytoplasmic side; that stretch reads KLAAKYPNYQ. The helical transmembrane segment at 338–358 threads the bilayer; the sequence is WLYGAFGLVIIGVSSCTIPAC. The Lumenal, vesicle portion of the chain corresponds to 359–363; the sequence is RNFEE. Residues 364-384 form a helical membrane-spanning segment; the sequence is LIIPLCALCFGIALVDTALLP. At 385-400 the chain is on the cytoplasmic side; that stretch reads TLAFLVDIRYVSVYGS. Residues 401-421 traverse the membrane as a helical segment; that stretch reads VYAIADISYSVAYALGPIMAG. At 422–428 the chain is on the lumenal, vesicle side; that stretch reads QIVHDLG. The chain crosses the membrane as a helical span at residues 429-449; that stretch reads FVQLNLGMGLVNILYAPALLF. Over 450–511 the chain is Cytoplasmic; the sequence is LRNVCQMKPS…VLSDQEGYSE (62 aa). The disordered stretch occupies residues 486-511; that stretch reads AKEPHGTSSGNHSVHAVLSDQEGYSE.

Belongs to the major facilitator superfamily. Vesicular transporter family. In terms of tissue distribution, high expression in the electric lobe of the brain.

The protein localises to the membrane. Its function is as follows. Involved in acetylcholine transport into synaptic vesicles. The protein is Vesicular acetylcholine transporter of Torpedo torpedo (Common torpedo).